The chain runs to 65 residues: Vespid chemotactic peptide 5h (65 aa).

The N-terminal stretch at Met-1–Ala-23 is a signal peptide. 7 AXPX repeats span residues Ala-23–Ala-26, Ala-27–Leu-30, Ala-31–Gly-34, Ala-35–Asp-38, Ala-39–Asn-42, Ala-43–Leu-46, and Ala-47–Phe-50. The propeptide occupies Ala-24–Pro-49. The residue at position 62 (Leu-62) is a Leucine amide.

This sequence belongs to the MCD family. Crabrolin subfamily. As to expression, expressed by the venom gland.

It is found in the secreted. Functionally, shows antimicrobial activity against the Gram-negative bacteria E.coli ATCC 25922 (MIC=30 ug/ml), the Gram-positive bacteria S.aureus ATCC 2592 (MIC=5 ug/ml) and the fungus C.albicans ATCC 2002 (MIC=25 ug/ml). Acts as a mast cell degranulating peptide. Its mast cell degranulation activity may be related to the activation of G-protein coupled receptors in mast cells as well as interaction with other proteins located in cell endosomal membranes in the mast cells. Induces the chemotaxis of neutrophils. The polypeptide is Vespid chemotactic peptide 5h (Vespa magnifica (Hornet)).